Consider the following 315-residue polypeptide: DNA-directed RNA polymerase subunit alpha (315 aa).

Residues Met1–Gln229 are alpha N-terminal domain (alpha-NTD). Residues Glu247–Glu315 form an alpha C-terminal domain (alpha-CTD) region.

Belongs to the RNA polymerase alpha chain family. As to quaternary structure, homodimer. The RNAP catalytic core consists of 2 alpha, 1 beta, 1 beta' and 1 omega subunit. When a sigma factor is associated with the core the holoenzyme is formed, which can initiate transcription.

The catalysed reaction is RNA(n) + a ribonucleoside 5'-triphosphate = RNA(n+1) + diphosphate. In terms of biological role, DNA-dependent RNA polymerase catalyzes the transcription of DNA into RNA using the four ribonucleoside triphosphates as substrates. This is DNA-directed RNA polymerase subunit alpha from Thermus thermophilus (strain ATCC BAA-163 / DSM 7039 / HB27).